The primary structure comprises 1203 residues: DNA-directed RNA polymerase subunit beta (1203 aa).

A disordered region spans residues 1167–1203; it reads LSKYAQQQEEQRKAAAQTDESKTAPATKNESQPNTQD. Positions 1190-1203 are enriched in polar residues; sequence APATKNESQPNTQD.

Belongs to the RNA polymerase beta chain family. The RNAP catalytic core consists of 2 alpha, 1 beta, 1 beta' and 1 omega subunit. When a sigma factor is associated with the core the holoenzyme is formed, which can initiate transcription.

It carries out the reaction RNA(n) + a ribonucleoside 5'-triphosphate = RNA(n+1) + diphosphate. Its function is as follows. DNA-dependent RNA polymerase catalyzes the transcription of DNA into RNA using the four ribonucleoside triphosphates as substrates. This is DNA-directed RNA polymerase subunit beta from Levilactobacillus brevis (strain ATCC 367 / BCRC 12310 / CIP 105137 / JCM 1170 / LMG 11437 / NCIMB 947 / NCTC 947) (Lactobacillus brevis).